The following is a 162-amino-acid chain: CD-NTase-associated protein 7 (162 aa).

Residues His138–Asn162 form a disordered region. The segment covering Ser139–Tyr154 has biased composition (polar residues).

The protein belongs to the HORMA family. HORMA1 subfamily. In terms of assembly, forms complexes with CdnC with 1:1 and 2:2 stoichimetry, and a 1:1:6 CdnC:Cap7:Cap6 complex.

Functionally, sensor protein of a CBASS antivirus system. CBASS (cyclic oligonucleotide-based antiphage signaling system) provides immunity against bacteriophage. The CD-NTase protein synthesizes cyclic nucleotides in response to infection; these serve as specific second messenger signals. The signals activate a diverse range of effectors, leading to bacterial cell death and thus abortive phage infection. A type III CBASS system. Expression of this CBASS system (Cap18-Cap6-Cap7-CdnC-CapW-Cap17) in a susceptible E.coli (strain MG1655) confers resistance to bacteriophage P1. The sensor protein for this CBASS system. Binds to a closure peptide, which allows it to activate CdnC for second messenger synthesis. This chain is CD-NTase-associated protein 7, found in Escherichia coli (strain KTE188).